The following is a 1104-amino-acid chain: Transient receptor potential cation channel subfamily M member 8 (1104 aa).

Over 1–733 (MSFEGARLSM…LWYYVAFFTS (733 aa)) the chain is Cytoplasmic. Residues 734–758 (PFVVFSWNVVFYIAFLLLFAYVLLM) traverse the membrane as a helical segment. Residues 759–765 (DFHSVPH) are Extracellular-facing. Residues 766–789 (TPELILYALVFVLFCDEVRQWYMN) traverse the membrane as a helical segment. Ca(2+) contacts are provided by E782 and Q785. At 790–796 (GVNYFTD) the chain is on the cytoplasmic side. Residues 797 to 817 (LWNVMDTLGLFYFIAGIVFRL) form a helical membrane-spanning segment. Ca(2+)-binding residues include N799 and D802. At 818-822 (HSSNK) the chain is on the extracellular side. Residues 823 to 848 (SSLYSGRVIFCLDYIIFTLRLIHIFT) form a helical membrane-spanning segment. Topologically, residues 849-853 (VSRNL) are cytoplasmic. A helical transmembrane segment spans residues 854-890 (GPKIIMLQRMLIDVFFFLFLFAVWMVAFGVARQGILR). The Extracellular segment spans residues 891–895 (QNEQR). The pore-forming intramembrane region spans 896–912 (WRWIFRSVIYEPYLAMF). The Extracellular segment spans residues 913–953 (GQVPSDVDSTTYDFSHCTFSGNESKPLCVELDEYNLPRFPE). Residues 954–984 (WITIPLVCIYMLSTNILLVNLLVAMFGYTVG) form a helical membrane-spanning segment. At 985-1104 (IVQENNDQVW…LLKEIANKIK (120 aa)) the chain is on the cytoplasmic side. The stretch at 1067-1104 (INTKANDNAEEMRHRFRQLDTKLNDLKGLLKEIANKIK) forms a coiled coil.

The protein belongs to the transient receptor (TC 1.A.4) family. LTrpC subfamily. TRPM8 sub-subfamily. As to quaternary structure, homotetramer. Interacts (via N-terminus and C-terminus domains) with TCAF1; the interaction stimulates TRPM8 channel activity. Interacts (via N-terminus and C-terminus domains) with TCAF2; the interaction inhibits TRPM8 channel activity. As to expression, expressed in dorsal root and trigeminal ganglia. Specifically expressed in a subset of sensory neurons, including cold-sensitive neurons in trigeminal neurons.

The protein resides in the cell membrane. It is found in the membrane raft. The catalysed reaction is Ca(2+)(in) = Ca(2+)(out). It carries out the reaction Na(+)(in) = Na(+)(out). The enzyme catalyses K(+)(in) = K(+)(out). Activated by cold temperatures and by both natural and synthetic cooling compounds such as menthol and icilin. Activation of the channel requires the presence of PI(4,5)P2; PI(4,5)P2 is necessary to gate the channel. Activated by intracellular Ca(2+). Functionally, non-selective ion channel permeable to monovalent and divalent cations, including Na(+), K(+), and Ca(2+), with higher permeability for Ca(2+). Activated by multiple factors, such as temperature, voltage, pressure, and changes in osmolality. Activated by cool temperatures (&lt;23-28 degrees Celsius) and by chemical ligands evoking a sensation of coolness, such as menthol and icilin, therefore plays a central role in the detection of environmental cold temperatures. TRPM8 is a voltage-dependent channel; its activation by cold or chemical ligands shifts its voltage thresholds towards physiological membrane potentials, leading to the opening of the channel. In addition to its critical role in temperature sensing, regulates basal tear secretion by sensing evaporation-induced cooling and changes in osmolality. The sequence is that of Transient receptor potential cation channel subfamily M member 8 (Trpm8) from Rattus norvegicus (Rat).